Here is a 788-residue protein sequence, read N- to C-terminus: Auxin response factor 4 (788 aa).

Residues 1–19 (MEFDLNTEIAEVEEEENDD) show a composition bias toward acidic residues. Residues 1–53 (MEFDLNTEIAEVEEEENDDVGVGVGGGTRIDKGRLGISPSSSSSCSSGSSSSS) form a disordered region. The span at 38 to 53 (SPSSSSSCSSGSSSSS) shows a compositional bias: low complexity. The segment at residues 177–279 (FCKTLTASDT…ELRLGIRRAA (103 aa)) is a DNA-binding region (TF-B3). The interval 413–433 (LSIQSSPRPKRPWAGLLDTTP) is disordered. The region spanning 665 to 747 (RICTKVHKQG…VVWKIHLYTK (83 aa)) is the PB1 domain.

Belongs to the ARF family. As to quaternary structure, homodimers and heterodimers. Expressed in the whole plant.

It is found in the nucleus. Its function is as follows. Auxin response factors (ARFs) are transcriptional factors that bind specifically to the DNA sequence 5'-TGTCTC-3' found in the auxin-responsive promoter elements (AuxREs). Could act as transcriptional activator or repressor. Formation of heterodimers with Aux/IAA proteins may alter their ability to modulate early auxin response genes expression. The protein is Auxin response factor 4 (ARF4) of Arabidopsis thaliana (Mouse-ear cress).